Here is a 411-residue protein sequence, read N- to C-terminus: MELSQKEIGLDRSKDDNGLSSNDYVVLGIHYPIDSDDDKVVELANKRSNSAGGSIGMFQQFFNKVEEFDYHPGFLSDVISRIHFTYRTKFIPIARSDDGPSPLRINFLIGDNPFNAIENAIYNPNCFNTDIGWGCMIRTGQSLLANAIQIAILGREFRVNDGDVNEQERKIISWFMDTPDEPFSLHNFVKKGCELSSKKPGEWFGPAATSRSIQSLVEQFPDCGIDRCIVSVSSADIFKDEINDIFKNKRYSNILLLMGVKLGVDKVNEYYLKDIRKILESRYSVGISGGRPSSSLYFFGYQDDTLLYFDPHKPQPSTIESLLETCHTDNFDKINISDMDPSMLIGVLLQGEDDWQSWSNEVFDSKIINILNSRNDVTIAEDSMSLEETLEPPDNEYVDLGPMSQQLNGSP.

The active-site Nucleophile is the Cys135. Active-site residues include Asp310 and His312. A disordered region spans residues 390-411 (LEPPDNEYVDLGPMSQQLNGSP).

It belongs to the peptidase C54 family.

Its subcellular location is the cytoplasm. The protein resides in the nucleus. It is found in the preautophagosomal structure. The enzyme catalyses [protein]-C-terminal L-amino acid-glycyl-phosphatidylethanolamide + H2O = [protein]-C-terminal L-amino acid-glycine + a 1,2-diacyl-sn-glycero-3-phosphoethanolamine. Functionally, cysteine protease that plays a key role in cytoplasm to vacuole transport (Cvt) and autophagy by mediating both proteolytic activation and delipidation of ATG8. Required for selective autophagic degradation of the nucleus (nucleophagy) as well as for mitophagy which contributes to regulate mitochondrial quantity and quality by eliminating the mitochondria to a basal level to fulfill cellular energy requirements and preventing excess ROS production. The protease activity is required for proteolytic activation of ATG8: cleaves the C-terminal amino acid of ATG8 to reveal a C-terminal glycine. ATG8 ubiquitin-like activity requires the exposure of the glycine at the C-terminus for its conjugation to phosphatidylethanolamine (PE) and its insertion to membranes, which is necessary for autophagy. The ATG8-PE conjugate mediates tethering between adjacent membranes and stimulates membrane hemifusion, leading to expansion of the autophagosomal membrane during autophagy. In addition to the protease activity, also catalyzes deconjugation of PE-conjugated forms of ATG8 during macroautophagy: ATG8 delipidation is required to release the protein from membranes, which facilitates multiple events during macroautophagy, and especially for efficient autophagosome biogenesis, the assembly of ATG9-containing tubulovesicular clusters into phagophores/autophagosomes, and for the disassembly of PAS-associated ATG components. ATG8 delipidation by ATG4 also recycles ATG8-PE generated on inappropriate membranes to maintain a reservoir of unlipidated ATG8 that is required for autophagosome formation at the PAS. The chain is Probable cysteine protease ATG4 (ATG4) from Vanderwaltozyma polyspora (strain ATCC 22028 / DSM 70294 / BCRC 21397 / CBS 2163 / NBRC 10782 / NRRL Y-8283 / UCD 57-17) (Kluyveromyces polysporus).